Consider the following 284-residue polypeptide: Pantothenate synthetase (284 aa).

Residue 30 to 37 (MGFLHEGH) participates in ATP binding. The active-site Proton donor is His37. Gln61 lines the (R)-pantoate pocket. Residue Gln61 coordinates beta-alanine. ATP is bound at residue 147–150 (GRKD). Gln153 is a binding site for (R)-pantoate. Residues Val176 and 184–187 (MSSR) each bind ATP.

This sequence belongs to the pantothenate synthetase family. In terms of assembly, homodimer.

The protein resides in the cytoplasm. The catalysed reaction is (R)-pantoate + beta-alanine + ATP = (R)-pantothenate + AMP + diphosphate + H(+). The protein operates within cofactor biosynthesis; (R)-pantothenate biosynthesis; (R)-pantothenate from (R)-pantoate and beta-alanine: step 1/1. Functionally, catalyzes the condensation of pantoate with beta-alanine in an ATP-dependent reaction via a pantoyl-adenylate intermediate. In Pelobacter propionicus (strain DSM 2379 / NBRC 103807 / OttBd1), this protein is Pantothenate synthetase.